The following is a 1343-amino-acid chain: DNA-directed RNA polymerase subunit beta (1343 aa).

This sequence belongs to the RNA polymerase beta chain family. In terms of assembly, the RNAP catalytic core consists of 2 alpha, 1 beta, 1 beta' and 1 omega subunit. When a sigma factor is associated with the core the holoenzyme is formed, which can initiate transcription.

It carries out the reaction RNA(n) + a ribonucleoside 5'-triphosphate = RNA(n+1) + diphosphate. Its function is as follows. DNA-dependent RNA polymerase catalyzes the transcription of DNA into RNA using the four ribonucleoside triphosphates as substrates. This is DNA-directed RNA polymerase subunit beta from Shewanella loihica (strain ATCC BAA-1088 / PV-4).